The sequence spans 393 residues: NAD(P)H-quinone oxidoreductase subunit H 1 (393 aa).

It belongs to the complex I 49 kDa subunit family. In terms of assembly, NDH-1 can be composed of about 15 different subunits; different subcomplexes with different compositions have been identified which probably have different functions.

The protein resides in the cell inner membrane. It catalyses the reaction a plastoquinone + NADH + (n+1) H(+)(in) = a plastoquinol + NAD(+) + n H(+)(out). It carries out the reaction a plastoquinone + NADPH + (n+1) H(+)(in) = a plastoquinol + NADP(+) + n H(+)(out). Functionally, NDH-1 shuttles electrons from an unknown electron donor, via FMN and iron-sulfur (Fe-S) centers, to quinones in the respiratory and/or the photosynthetic chain. The immediate electron acceptor for the enzyme in this species is believed to be plastoquinone. Couples the redox reaction to proton translocation, and thus conserves the redox energy in a proton gradient. Cyanobacterial NDH-1 also plays a role in inorganic carbon-concentration. This is NAD(P)H-quinone oxidoreductase subunit H 1 from Gloeobacter violaceus (strain ATCC 29082 / PCC 7421).